A 471-amino-acid polypeptide reads, in one-letter code: Probable ribonuclease FAU-1 (471 aa).

Belongs to the FAU-1 family.

Probable RNase involved in rRNA stability through maturation and/or degradation of precursor rRNAs. Binds to RNA in loop regions with AU-rich sequences. The sequence is that of Probable ribonuclease FAU-1 from Aeropyrum pernix (strain ATCC 700893 / DSM 11879 / JCM 9820 / NBRC 100138 / K1).